The primary structure comprises 941 residues: Protein BREAST CANCER SUSCEPTIBILITY 1 homolog (941 aa).

The RING-type zinc finger occupies 16–54 (CPICLSLYNSAVSLSCNHVFCNACIVKSMKMDATCPVCK). Disordered stretches follow at residues 87-282 (FVSQ…ILPS) and 303-528 (KVKV…GKDD). Basic and acidic residues-rich tracts occupy residues 96–115 (SDKE…DKNR) and 125–136 (KRNEYGKTKEID). A compositionally biased stretch (polar residues) spans 157–173 (LLQNLSAESLTKPTESV). The span at 175-196 (TAEKPKDYTENTVIRLDEHPSL) shows a compositional bias: basic and acidic residues. The segment covering 216–236 (NSSQRTESDQLLGTTPVNVPS) has biased composition (polar residues). Basic and acidic residues predominate over residues 242–255 (DSDHESPSKEDEQQ). The Nuclear localization signal 1 motif lies at 298–305 (QKKLPKVK). 2 stretches are compositionally biased toward polar residues: residues 329–357 (GVSQ…SGTI) and 376–391 (SKAQ…NVSN). Basic and acidic residues-rich tracts occupy residues 428–453 (GKGD…EKPS) and 477–487 (KTSEKKLKLDS). Residues 444-451 (EKRSPTEK) carry the Nuclear localization signal 2 motif. Over residues 489 to 498 (MISSKATQPH) the composition is skewed to polar residues. Basic and acidic residues predominate over residues 512 to 528 (DKQDSRNNRKSTVGKDD). Residues 561 to 612 (KFTCAFCQCSEDTEASGEMTHYYRGEPVSADFNGGSKVIHVHKNCAEWAPNV) form a C2HC pre-PHD-type zinc finger. Residues 632–681 (ISCSCCGLKGAALGCYNKSCKNSFHVTCAKLIPECRWDNVKFVMLCPLDA) form a PHD-type; degenerate zinc finger. 2 consecutive BRCT domains span residues 724–819 (KQFH…PYEI) and 840–941 (KKPK…LVLI).

As to quaternary structure, forms heterodimer with BARD1/ROW1. Expressed ubiquitously with highest levels in flower buds. Mostly expressed in flowers and siliques, and, to a lower extent, in roots, rosette leaves, inflorescence and young cauline leaves.

It is found in the nucleus. In terms of biological role, plays a role in DNA repair and in cell-cycle control. Required for the repair of DNA double-strand breaks (DSBs), both natural and induced by genotoxic stress, by homologous recombination (HR). The chain is Protein BREAST CANCER SUSCEPTIBILITY 1 homolog from Arabidopsis thaliana (Mouse-ear cress).